The sequence spans 228 residues: Protein CWC15 homolog A (228 aa).

A disordered region spans residues 1–126 (MTTAARPTFE…DEDSDDDTAA (126 aa)). The segment covering 24–34 (SQLSKQYSSRD) has biased composition (polar residues). The segment covering 52–84 (EEVRSRDFRRELEERERVVARDKNRDRPTREHT) has biased composition (basic and acidic residues). Residues 102 to 124 (DADDPLTDEDGDEDSDEDSDDDT) are compositionally biased toward acidic residues. A coiled-coil region spans residues 121–165 (DDDTAALLAELEKIKKERAEEKDRKELEQKAEEERIRMENILSGN).

This sequence belongs to the CWC15 family. As to quaternary structure, identified in the spliceosome C complex. Component of the minor spliceosome, which splices U12-type introns.

Its subcellular location is the nucleus. In terms of biological role, involved in pre-mRNA splicing as component of the spliceosome. In Xenopus laevis (African clawed frog), this protein is Protein CWC15 homolog A (cwc15-a).